A 139-amino-acid chain; its full sequence is Trafficking protein particle complex subunit 2-like protein (139 aa).

This sequence belongs to the TRAPP small subunits family. Sedlin subfamily. As to quaternary structure, component of the multisubunit TRAPP (transport protein particle) complex, which includes at least TRAPPC2, TRAPPC2L, TRAPPC3, TRAPPC3L, TRAPPC4, TRAPPC5, TRAPPC8, TRAPPC9, TRAPPC10, TRAPPC11 and TRAPPC12. Interacts with the heterodimer TRAPPC3-TRAPPC6A.

It localises to the cytoplasm. The protein resides in the perinuclear region. It is found in the endoplasmic reticulum. Its subcellular location is the golgi apparatus. In terms of biological role, may play a role in vesicular transport from endoplasmic reticulum to Golgi. The protein is Trafficking protein particle complex subunit 2-like protein (Trappc2l) of Rattus norvegicus (Rat).